Here is a 314-residue protein sequence, read N- to C-terminus: tRNA pseudouridine synthase B (314 aa).

A substrate-binding site is contributed by histidine 43. The active-site Nucleophile is aspartate 48. Residues tyrosine 76, tyrosine 179, and leucine 200 each contribute to the substrate site.

Belongs to the pseudouridine synthase TruB family. Type 1 subfamily.

The catalysed reaction is uridine(55) in tRNA = pseudouridine(55) in tRNA. Its function is as follows. Responsible for synthesis of pseudouridine from uracil-55 in the psi GC loop of transfer RNAs. This chain is tRNA pseudouridine synthase B, found in Serratia proteamaculans (strain 568).